The primary structure comprises 292 residues: Aquaporin-3 (292 aa).

Residues Met-1–Gln-24 lie on the Cytoplasmic side of the membrane. A helical membrane pass occupies residues Ala-25 to Ser-42. At Val-43–Phe-56 the chain is on the extracellular side. The helical transmembrane segment at Leu-57–Ala-74 threads the bilayer. At Gly-75–Ser-78 the chain is on the cytoplasmic side. Positions Gly-79 to Phe-92 form an intramembrane region, discontinuously helical. The short motif at Asn-83–Ala-85 is the NPA 1 element. The Cytoplasmic segment spans residues Leu-93–Lys-100. A helical transmembrane segment spans residues Leu-101–Gly-121. The Extracellular segment spans residues Leu-122–Asn-159. Residue Asn-141 is glycosylated (N-linked (GlcNAc...) asparagine). The chain crosses the membrane as a helical span at residues Gly-160–Ala-177. Residues Ile-178 to Gly-189 are Cytoplasmic-facing. A helical membrane pass occupies residues Leu-190 to Met-206. Over Gly-207–Ser-210 the chain is Extracellular. The segment at residues Gly-211 to Leu-224 is an intramembrane region (discontinuously helical). The NPA 2 motif lies at Asn-215–Ala-217. The Extracellular portion of the chain corresponds to Phe-225–Trp-242. Residues Trp-243 to Met-264 traverse the membrane as a helical segment. The Cytoplasmic segment spans residues Ile-265 to Ile-292.

It belongs to the MIP/aquaporin (TC 1.A.8) family. In terms of assembly, homotetramer; each monomer provides an independent glycerol/water pore. Could also exist in other oligomeric states. Detected in principal cells in collecting ducts in kidney medulla (at protein level). Renal medulla and colon. Predominantly in the inner medulla. Expressed in basal layer of epidermal keratinocytes.

The protein localises to the cell membrane. The protein resides in the basolateral cell membrane. It carries out the reaction glycerol(in) = glycerol(out). The catalysed reaction is H2O(in) = H2O(out). The enzyme catalyses urea(in) = urea(out). It catalyses the reaction H2O2(out) = H2O2(in). Functionally, aquaglyceroporins form homotetrameric transmembrane channels, with each monomer independently mediating glycerol and water transport across the plasma membrane along their osmotic gradient. Could also be permeable to urea. Also participates in cell permeability to H2O2 and H2O2-mediated signaling. In skin, transports glycerol to the epidermis and stratum corneum, where it maintains hydration, elasticity, and supports lipid biosynthesis for barrier repair. In kidney, contributes to the reabsorption of water, helping the body maintain proper fluid balance. The chain is Aquaporin-3 from Mus musculus (Mouse).